Reading from the N-terminus, the 483-residue chain is Glutamyl-tRNA(Gln) amidotransferase subunit A (483 aa).

Residues Lys-77 and Ser-152 each act as charge relay system in the active site. The Acyl-ester intermediate role is filled by Ser-176.

It belongs to the amidase family. GatA subfamily. In terms of assembly, heterotrimer of A, B and C subunits.

It carries out the reaction L-glutamyl-tRNA(Gln) + L-glutamine + ATP + H2O = L-glutaminyl-tRNA(Gln) + L-glutamate + ADP + phosphate + H(+). In terms of biological role, allows the formation of correctly charged Gln-tRNA(Gln) through the transamidation of misacylated Glu-tRNA(Gln) in organisms which lack glutaminyl-tRNA synthetase. The reaction takes place in the presence of glutamine and ATP through an activated gamma-phospho-Glu-tRNA(Gln). The protein is Glutamyl-tRNA(Gln) amidotransferase subunit A of Listeria monocytogenes serotype 4a (strain HCC23).